We begin with the raw amino-acid sequence, 404 residues long: Ubiquitin-like modifier-activating enzyme 5 (404 aa).

ATP contacts are provided by Gly83, Asp104, Lys127, Asn150, and Asn184. Residues Cys226 and Cys229 each coordinate Zn(2+). Cys250 serves as the catalytic Glycyl thioester intermediate. 2 residues coordinate Zn(2+): Cys303 and Cys308. Residues 372 to 393 form a disordered region; that stretch reads APEKSSETSEETVTAATADETS. Residues 382-391 are compositionally biased toward low complexity; sequence ETVTAATADE.

Belongs to the ubiquitin-activating E1 family. UBA5 subfamily.

Its function is as follows. E1-like enzyme which activates UFM1. The polypeptide is Ubiquitin-like modifier-activating enzyme 5 (Drosophila simulans (Fruit fly)).